The chain runs to 48 residues: Large ribosomal subunit protein bL36c (48 aa).

This sequence belongs to the bacterial ribosomal protein bL36 family.

The protein localises to the plastid. Its subcellular location is the chloroplast. This chain is Large ribosomal subunit protein bL36c, found in Rhodomonas salina (Cryptomonas salina).